The chain runs to 678 residues: Pescadillo homolog (678 aa).

Positions 283–303 (EEEEPEEVDSEAGDEDDDDLP) are enriched in acidic residues. Positions 283–316 (EEEEPEEVDSEAGDEDDDDLPVLDSGTRRRRAAA) are disordered. The BRCT domain occupies 361 to 451 (VCGSLFRGRV…VLMPTDLYAP (91 aa)). The stretch at 552-587 (MTRKARKMYNNMKQKEAAKQERVQQLESKKAKLAAT) forms a coiled coil. The segment at 563–678 (MKQKEAAKQE…DAAPAKRQRR (116 aa)) is disordered. Over residues 564-581 (KQKEAAKQERVQQLESKK) the composition is skewed to basic and acidic residues. 2 stretches are compositionally biased toward low complexity: residues 597–618 (KPAAAGKAAAAKAAAPAKVAAS) and 630–661 (APAPAKGKGTPAAKGKEAPAPAKGKGAAAAKE). The segment covering 662–672 (APAKGGKDAAP) has biased composition (basic and acidic residues).

Belongs to the pescadillo family.

It is found in the nucleus. The protein localises to the nucleolus. The protein resides in the nucleoplasm. Functionally, required for maturation of ribosomal RNAs and formation of the large ribosomal subunit. The polypeptide is Pescadillo homolog (Chlamydomonas reinhardtii (Chlamydomonas smithii)).